Reading from the N-terminus, the 1334-residue chain is SCAR-like protein 2 (1334 aa).

Positions 197-207 (KTGNFQREKKS) are enriched in basic and acidic residues. 10 disordered regions span residues 197-281 (KTGN…SSFS), 294-331 (DTKP…GTSA), 481-516 (PDSS…ADAP), 568-602 (PNQS…SSYT), 643-668 (DKPT…TVES), 791-832 (STSH…KNII), 931-956 (FEKK…YSEK), 1000-1026 (FQLL…GRSY), 1248-1268 (SGQQ…DTKN), and 1280-1304 (RSKT…TANS). Residues 241 to 256 (VQLTSRHFATPSTDGR) show a composition bias toward polar residues. Residues 310–319 (SNNNLHKLSN) are compositionally biased toward low complexity. Positions 320-330 (TPLHTRLNGTS) are enriched in polar residues. A compositionally biased stretch (basic and acidic residues) spans 574–595 (DSKEIPDSKAEDAPIDSPEKLE). The span at 791-823 (STSHSSETNQSTVRTPDTVIGQTEGSTGCSTSF) shows a compositional bias: polar residues. The span at 945–956 (SSLFSSSHYSEK) shows a compositional bias: low complexity. The span at 1248–1260 (SGQQKLNGHEKSK) shows a compositional bias: basic and acidic residues. The 19-residue stretch at 1271 to 1289 (EREELLQQIRSKTFNLRRT) folds into the WH2 domain. The span at 1289–1304 (TNASKTNTSSPTTANS) shows a compositional bias: low complexity.

The protein belongs to the SCAR/WAVE family.

Its subcellular location is the cytoplasm. The protein localises to the cytoskeleton. Functionally, involved in regulation of actin and microtubule organization. Part of a WAVE complex that activates the Arp2/3 complex. This Oryza sativa subsp. japonica (Rice) protein is SCAR-like protein 2.